The following is a 273-amino-acid chain: Shikimate dehydrogenase (NADP(+)) (273 aa).

Residues 14-16 (SLS) and Thr59 contribute to the shikimate site. Lys63 acts as the Proton acceptor in catalysis. Residues Asn84 and Asp99 each coordinate shikimate. NADP(+) contacts are provided by residues 122 to 126 (GAGGA) and Met212. Tyr214 serves as a coordination point for shikimate. Gly235 provides a ligand contact to NADP(+).

It belongs to the shikimate dehydrogenase family. In terms of assembly, homodimer.

It catalyses the reaction shikimate + NADP(+) = 3-dehydroshikimate + NADPH + H(+). It functions in the pathway metabolic intermediate biosynthesis; chorismate biosynthesis; chorismate from D-erythrose 4-phosphate and phosphoenolpyruvate: step 4/7. Its function is as follows. Involved in the biosynthesis of the chorismate, which leads to the biosynthesis of aromatic amino acids. Catalyzes the reversible NADPH linked reduction of 3-dehydroshikimate (DHSA) to yield shikimate (SA). In Aeropyrum pernix (strain ATCC 700893 / DSM 11879 / JCM 9820 / NBRC 100138 / K1), this protein is Shikimate dehydrogenase (NADP(+)).